Here is a 362-residue protein sequence, read N- to C-terminus: Glucuronokinase 1 (362 aa).

126–136 (PRQTGLSGSSA) contacts ATP. Asp179 functions as the Proton acceptor in the catalytic mechanism.

It belongs to the GHMP kinase family. Mg(2+) serves as cofactor. The cofactor is Mn(2+). Co(2+) is required as a cofactor. In terms of tissue distribution, highly expressed in pollen. Detected in seedlings, inflorescences, seeds, leaves and roots.

The enzyme catalyses D-glucuronate + ATP = 1-phospho-alpha-D-glucuronate + ADP + H(+). Its function is as follows. Sugar-1-kinase with a strict substrate specificity for D-glucuronic acid and ATP. Involved in the biosynthesis of UDP-glucuronic acid (UDP-GlcA), providing nucleotide sugars for cell-wall polymers. May be also involved in a salvage pathway for glucuronic acid. The polypeptide is Glucuronokinase 1 (GLCAK1) (Arabidopsis thaliana (Mouse-ear cress)).